The sequence spans 657 residues: Wall-associated receptor kinase-like 20 (657 aa).

Residues 1-23 (MEKKRSYYALLIPTLLTVWLACA) form the signal peptide. The Extracellular segment spans residues 24 to 293 (GHSCARHAKA…KHCKKKKKTV (270 aa)). N140 carries an N-linked (GlcNAc...) asparagine glycan. Residues 294–314 (VFAGAAVAVVGVTLAIAVAVI) form a helical membrane-spanning segment. The Cytoplasmic portion of the chain corresponds to 315–657 (GTKHSHQKVK…NILSQEVTET (343 aa)). The region spanning 363 to 646 (FSKDNLIGTG…KEVADEIEYI (284 aa)) is the Protein kinase domain. ATP-binding positions include 369-377 (IGTGGFGEV) and K391. D490 serves as the catalytic Proton acceptor.

The protein belongs to the protein kinase superfamily. Ser/Thr protein kinase family.

Its subcellular location is the membrane. It carries out the reaction L-seryl-[protein] + ATP = O-phospho-L-seryl-[protein] + ADP + H(+). It catalyses the reaction L-threonyl-[protein] + ATP = O-phospho-L-threonyl-[protein] + ADP + H(+). Functionally, serine/threonine-protein kinase that may function as a signaling receptor of extracellular matrix component. The sequence is that of Wall-associated receptor kinase-like 20 (WAKL20) from Arabidopsis thaliana (Mouse-ear cress).